Reading from the N-terminus, the 287-residue chain is Pyridoxal kinase PdxY (287 aa).

Residues Ser-10 and 45–46 (TQ) contribute to the substrate site. Residues Asp-112, Ala-144, Glu-149, Lys-182, and 209–212 (RPLV) each bind ATP. Substrate is bound at residue Asp-224.

This sequence belongs to the pyridoxine kinase family. PdxY subfamily. In terms of assembly, homodimer. Mg(2+) is required as a cofactor.

It catalyses the reaction pyridoxal + ATP = pyridoxal 5'-phosphate + ADP + H(+). Its pathway is cofactor metabolism; pyridoxal 5'-phosphate salvage; pyridoxal 5'-phosphate from pyridoxal: step 1/1. Pyridoxal kinase involved in the salvage pathway of pyridoxal 5'-phosphate (PLP). Catalyzes the phosphorylation of pyridoxal to PLP. The polypeptide is Pyridoxal kinase PdxY (Shigella flexneri).